We begin with the raw amino-acid sequence, 85 residues long: Scratcher peptide (85 aa).

The first 24 residues, 1 to 24 (MTSVQSVTCCCLLWLMLSVQPITP), serve as a signal peptide directing secretion. Residues 25–38 (GSPGPAQLSRERSF) constitute a propeptide that is removed on maturation. At E47 the chain carries 4-carboxyglutamate. An Aspartic acid 1-amide modification is found at D67. A propeptide spanning residues 68 to 85 (KRDVVSPRIRRRKRSKAM) is cleaved from the precursor.

Belongs to the conotoxin J superfamily. Post-translationally, contains 2 disulfide bonds. As to expression, expressed by the venom duct.

It localises to the secreted. In terms of biological role, causes scratching in mice. This is Scratcher peptide from Conus geographus (Geography cone).